The chain runs to 24 residues: Myotoxin TmC4-47.2 (24 aa).

Residues 1 to 24 form a disordered region; that stretch reads KASSSAPKGWTHHGSRFTFHRGSM. The span at 10-24 shows a compositional bias: basic residues; the sequence is WTHHGSRFTFHRGSM. In terms of domain architecture, C-type lectin spans 13–24; that stretch reads HGSRFTFHRGSM.

In terms of tissue distribution, expressed by the venom gland.

It is found in the secreted. Its function is as follows. Able to depolarize frog skeletal muscle fibers, but has no effects on squid giant axons. Tetrodotoxin is able to partially antagonize the depolarization. Induces myonecrosis. The sequence is that of Myotoxin TmC4-47.2 from Thalassophryne maculosa (Cano toadfish).